Reading from the N-terminus, the 581-residue chain is Sabinene synthase 1, chloroplastic (581 aa).

Residues 1–28 constitute a chloroplast transit peptide; that stretch reads MPLNSLHNLERKPSKAWSTSCTAPAARL. The (2E)-geranyl diphosphate site is built by Arg-297, Asp-334, Asp-338, Arg-475, and Asp-478. 2 residues coordinate Mg(2+): Asp-334 and Asp-338. The DDXXD motif signature appears at 334–338; that stretch reads DDVYD. The Mg(2+) site is built by Asp-478, Thr-482, and Glu-486.

Belongs to the terpene synthase family. Tpsb subfamily. The cofactor is Mg(2+). It depends on Mn(2+) as a cofactor.

The protein resides in the plastid. Its subcellular location is the chloroplast. The enzyme catalyses (2E)-geranyl diphosphate = sabinene + diphosphate. It catalyses the reaction (2E)-geranyl diphosphate = beta-myrcene + diphosphate. Its pathway is secondary metabolite biosynthesis; terpenoid biosynthesis. Monoterpene synthase (TPS) involved in the biosynthesis of monoterpene natural products, components of the chemical defense arsenal. Catalyzes the conversion of (2E)-geranyl diphosphate (GPP) into sabinene, and, as minor products, myrcene. This is Sabinene synthase 1, chloroplastic from Salvia pomifera (Apple sage).